Consider the following 266-residue polypeptide: Pyridoxal phosphate phosphatase YigL (266 aa).

The Nucleophile role is filled by aspartate 8. Aspartate 8 contacts Mg(2+). Position 9 (leucine 9) interacts with phosphate. Residue aspartate 10 participates in Mg(2+) binding. Phosphate contacts are provided by residues 42-43 (TG) and lysine 191. Aspartate 214 contributes to the Mg(2+) binding site. Asparagine 217 contacts phosphate.

Belongs to the HAD-like hydrolase superfamily. Cof family. It depends on Mg(2+) as a cofactor. The cofactor is Mn(2+). Co(2+) serves as cofactor. Requires Zn(2+) as cofactor.

The catalysed reaction is pyridoxal 5'-phosphate + H2O = pyridoxal + phosphate. The enzyme catalyses sugar phosphate + H2O = sugar + phosphate.. Catalyzes the dephosphorylation of pyridoxal-phosphate (PLP) and sugar phosphate. This is Pyridoxal phosphate phosphatase YigL (yigL) from Escherichia coli O157:H7.